The sequence spans 502 residues: ATP synthase subunit alpha (502 aa).

Residue 169–176 (GDRQTGKT) coordinates ATP.

It belongs to the ATPase alpha/beta chains family. As to quaternary structure, F-type ATPases have 2 components, CF(1) - the catalytic core - and CF(0) - the membrane proton channel. CF(1) has five subunits: alpha(3), beta(3), gamma(1), delta(1), epsilon(1). CF(0) has three main subunits: a(1), b(2) and c(9-12). The alpha and beta chains form an alternating ring which encloses part of the gamma chain. CF(1) is attached to CF(0) by a central stalk formed by the gamma and epsilon chains, while a peripheral stalk is formed by the delta and b chains.

The protein resides in the cell inner membrane. It carries out the reaction ATP + H2O + 4 H(+)(in) = ADP + phosphate + 5 H(+)(out). Produces ATP from ADP in the presence of a proton gradient across the membrane. The alpha chain is a regulatory subunit. The chain is ATP synthase subunit alpha from Solidesulfovibrio magneticus (strain ATCC 700980 / DSM 13731 / RS-1) (Desulfovibrio magneticus).